The chain runs to 59 residues: Protein B3 (59 aa).

This is Protein B3 (B3) from Homo sapiens (Human).